The following is a 917-amino-acid chain: Protein translocase subunit SecA (917 aa).

Residues Gln87, 105 to 109 (GEGKT), and Asp501 each bind ATP. Residues Cys901, Cys903, Cys912, and His913 each contribute to the Zn(2+) site.

Belongs to the SecA family. As to quaternary structure, monomer and homodimer. Part of the essential Sec protein translocation apparatus which comprises SecA, SecYEG and auxiliary proteins SecDF-YajC and YidC. Zn(2+) serves as cofactor.

Its subcellular location is the cell inner membrane. The protein localises to the cytoplasm. The catalysed reaction is ATP + H2O + cellular proteinSide 1 = ADP + phosphate + cellular proteinSide 2.. In terms of biological role, part of the Sec protein translocase complex. Interacts with the SecYEG preprotein conducting channel. Has a central role in coupling the hydrolysis of ATP to the transfer of proteins into and across the cell membrane, serving both as a receptor for the preprotein-SecB complex and as an ATP-driven molecular motor driving the stepwise translocation of polypeptide chains across the membrane. This chain is Protein translocase subunit SecA, found in Granulibacter bethesdensis (strain ATCC BAA-1260 / CGDNIH1).